The sequence spans 797 residues: Protocadherin beta-11 (797 aa).

Residues 1-26 (MENGGTRTQQIRQVLLLFVLLGMSQA) form the signal peptide. The Extracellular portion of the chain corresponds to 27 to 690 (GSETWSFSVA…AQTDFLTVYL (664 aa)). Cadherin domains lie at 35-133 (VAEE…SPIF), 138-242 (MLLE…SPEF), 247-347 (YEVK…APEI), 352-451 (ITSP…APTF), and 456-561 (YTLF…SPFV). 4 N-linked (GlcNAc...) asparagine glycosylation sites follow: asparagine 418, asparagine 436, asparagine 487, and asparagine 567. Positions 568–671 (GSAPCTELVP…LVDGFSQPFL (104 aa)) constitute a Cadherin 6 domain. The chain crosses the membrane as a helical span at residues 691-711 (VVALASVSSLFFFSVLLFVAV). Topologically, residues 712–797 (RLCRRSRAAS…TFQNSFGFNF (86 aa)) are cytoplasmic.

It is found in the cell membrane. In terms of biological role, potential calcium-dependent cell-adhesion protein. May be involved in the establishment and maintenance of specific neuronal connections in the brain. The sequence is that of Protocadherin beta-11 (PCDHB11) from Pan troglodytes (Chimpanzee).